A 355-amino-acid polypeptide reads, in one-letter code: Uroporphyrinogen decarboxylase (355 aa).

Substrate contacts are provided by residues 38 to 42 (RQAGR), Asp87, Tyr162, Ser217, and His331.

This sequence belongs to the uroporphyrinogen decarboxylase family. As to quaternary structure, homodimer.

It is found in the cytoplasm. It carries out the reaction uroporphyrinogen III + 4 H(+) = coproporphyrinogen III + 4 CO2. The protein operates within porphyrin-containing compound metabolism; protoporphyrin-IX biosynthesis; coproporphyrinogen-III from 5-aminolevulinate: step 4/4. Functionally, catalyzes the decarboxylation of four acetate groups of uroporphyrinogen-III to yield coproporphyrinogen-III. The sequence is that of Uroporphyrinogen decarboxylase from Streptomyces avermitilis (strain ATCC 31267 / DSM 46492 / JCM 5070 / NBRC 14893 / NCIMB 12804 / NRRL 8165 / MA-4680).